Here is a 325-residue protein sequence, read N- to C-terminus: Transcription initiation factor IIB (325 aa).

The segment at 19 to 52 adopts a TFIIB-type zinc-finger fold; it reads NKLWCMVCRIQDPDIIEDYAKGDLICRGCGVVVG. The Zn(2+) site is built by Cys23, Cys26, Cys44, and Cys47. 2 consecutive repeat copies span residues 131 to 207 and 227 to 303.

This sequence belongs to the TFIIB family.

It is found in the nucleus. Its function is as follows. General transcription factor that plays a role in transcription initiation by RNA polymerase II (Pol II). Involved in the pre-initiation complex (PIC) formation and Pol II recruitment at promoter DNA. This chain is Transcription initiation factor IIB (gtf2b), found in Dictyostelium discoideum (Social amoeba).